The sequence spans 223 residues: Probable GTP-binding protein EngB (223 aa).

The region spanning 25-199 (TGVEIAFAGR…SRLLQDWFDE (175 aa)) is the EngB-type G domain. Residues 33–40 (GRSNAGKS), 60–64 (GRTQH), 78–81 (DLPG), 145–148 (TKAD), and 178–180 (FSS) each bind GTP. Mg(2+)-binding residues include serine 40 and threonine 62.

It belongs to the TRAFAC class TrmE-Era-EngA-EngB-Septin-like GTPase superfamily. EngB GTPase family. Mg(2+) serves as cofactor.

Functionally, necessary for normal cell division and for the maintenance of normal septation. This chain is Probable GTP-binding protein EngB, found in Nitrosomonas eutropha (strain DSM 101675 / C91 / Nm57).